The following is an 873-amino-acid chain: E3 ubiquitin-protein ligase UPL5 (873 aa).

Positions 1–19 are enriched in polar residues; the sequence is MTLSRSSADDSTNNANRSY. Disordered stretches follow at residues 1–37 and 70–90; these read MTLS…DSSD and RSGE…SNRP. The 77-residue stretch at 95 to 171 folds into the Ubiquitin-like domain; the sequence is LQIFVRMMSG…LQLVARMQST (77 aa). In terms of domain architecture, C-type lectin spans 272-296; it reads CLPIVLEFCKLLRKVCPDQKLYVTC. The HECT domain occupies 532–873; it reads SPEALHGGLF…DHVSSSFGKW (342 aa). The Glycyl thioester intermediate role is filled by cysteine 839.

It belongs to the UPL family. Interacts with WRKY53.

The protein resides in the cytoplasm. The catalysed reaction is S-ubiquitinyl-[E2 ubiquitin-conjugating enzyme]-L-cysteine + [acceptor protein]-L-lysine = [E2 ubiquitin-conjugating enzyme]-L-cysteine + N(6)-ubiquitinyl-[acceptor protein]-L-lysine.. The protein operates within protein modification; protein ubiquitination. In terms of biological role, E3 ubiquitin protein ligase that regulates leaf senescence through ubiquitination and subsequent degradation of WRKY53. The polypeptide is E3 ubiquitin-protein ligase UPL5 (UPL5) (Arabidopsis thaliana (Mouse-ear cress)).